The sequence spans 3132 residues: Enniatin synthetase (3132 aa).

Residues 53-466 (ADDKQRAVGH…VEKVDMMTQE (414 aa)) form a condensation 1 region. The segment at 186–212 (NDEHPRQFETPDSSQATPEEDLQPNPS) is disordered. Residues 495–887 (SQSPNKAAVA…GRMDSQVKIR (393 aa)) are adenylation 1. Positions 994-1013 (SQKTHSTPSQQSQAAISSGT) are disordered. One can recognise a Carrier 1 domain in the interval 1010–1086 (SSGTDTETKL…GLKAIVIGTS (77 aa)). At serine 1047 the chain carries O-(pantetheine 4'-phosphoryl)serine. Positions 1105–1534 (SYAQNRMWFL…ETCISVLPLT (430 aa)) are condensation 2. The tract at residues 1563–1960 (FREQAAANPE…GRMDNQFKIR (398 aa)) is adenylation 2. The S-adenosyl-L-methionine-dependent N-methyltransferase stretch occupies residues 2021-2177 (EGWQDHFESG…YLAEVIDGLI (157 aa)). Carrier domains follow at residues 2504-2578 (FPIS…RQGL) and 2598-2672 (APRT…ESSH). 2 positions are modified to O-(pantetheine 4'-phosphoryl)serine: serine 2538 and serine 2632. The interval 2719–3124 (QDVYPSTQMQ…RHVLEEVCKT (406 aa)) is condensation 3.

This sequence belongs to the NRP synthetase family. Requires pantetheine 4'-phosphate as cofactor.

The protein operates within antibiotic biosynthesis; enniatin biosynthesis. Its function is as follows. Nonribosomal peptide synthetase that synthesizes enniatin by coupling three D-hydroxycarboxylic acids and three L-amino acids via amide and ester bonds in an alternating fashion. Whereas ESYN1 can accept different amino acids as precursors (L-valine, L-isoleucine or L-leucine), only one species of D-hydroxycarboxylic acid can be found in natural enniatin isolates (D-hydroxyisovaleric acid, D-Hiv). D-Hiv stems from L-valine deanimation by a valine aminotransferase to 2-keto-isovaleric acid (2-Kiv), which becomes subsequently reduced by a keto-isovaleric acid reductase (KivR) to D-Hiv. The protein is Enniatin synthetase of Fusarium oxysporum (Fusarium vascular wilt).